A 510-amino-acid chain; its full sequence is Gallate 1-beta-glucosyltransferase (510 aa).

Residue H19 is the Proton acceptor of the active site. H19 is an an anthocyanidin binding site. The UDP-alpha-D-glucose site is built by Q343, H358, W361, N362, S363, and E366. G381 contributes to the an anthocyanidin binding site. Residues D382 and Q383 each coordinate UDP-alpha-D-glucose.

The protein belongs to the UDP-glycosyltransferase family. Expressed in swelling buds and young leaves.

It carries out the reaction 3,4,5-trihydroxybenzoate + UDP-alpha-D-glucose = 1-O-galloyl-beta-D-glucose + UDP. The enzyme catalyses vanillate + UDP-alpha-D-glucose = 1-O-(4-hydroxy-3-methoxybenzoyl)-beta-D-glucose + UDP. It catalyses the reaction 3,4-dihydroxybenzoate + UDP-alpha-D-glucose = 1-O-(3,4-dihydroxy-benzoyl)-beta-D-glucose + UDP. In terms of biological role, glucosyltransferase that catalyzes the formation of 1-O-beta-D-glucose esters with hydroxybenzoic acids as preferred glucosyl acceptors. Has the highest activity with 3,4-dihydroxybenzoate, vanillate and gallate in vitro. Gallate is the predicted native substrate of the enzyme, which thus catalyzes the formation of 1-O-galloyl-beta-D-glucose, the first committed step of gallotannin biosynthesis. The chain is Gallate 1-beta-glucosyltransferase from Quercus robur (English oak).